Reading from the N-terminus, the 344-residue chain is MKLLSLFSGAGGLDLGFERAGFEIIVANEYDKTIWETYEKNHKAKLIKKDIREILSEELPKSDGIIGGPPCQSWSEAGSLRGINDPRGKLFYEYIRILKDIQPKFFLAENVKGMLSKRNTEAVKDIIKEFEEAGYNVFIKLLNAFDYGVAQDRERVFYVGFRKDLNISNFEFPYPISEKERKYLKDSIWDLKDNALPGKDKNKTNADDCIVENHEYLTGSYSTIFMSRNRVRQWEQPAFTVQASGRQCQLHPQAPTMIKIDKNMYKFVAGKENLYRRLSIRECARIQGFPDTFKFYYTSLEDGYKMVGNAVPVDLAYIIAKRIKETLTDKEKIKKEIRQKTLFD.

One can recognise an SAM-dependent MTase C5-type domain in the interval 1-330; that stretch reads MKLLSLFSGA…KRIKETLTDK (330 aa). Cysteine 71 is a catalytic residue.

It belongs to the class I-like SAM-binding methyltransferase superfamily. C5-methyltransferase family.

The enzyme catalyses a 2'-deoxycytidine in DNA + S-adenosyl-L-methionine = a 5-methyl-2'-deoxycytidine in DNA + S-adenosyl-L-homocysteine + H(+). In terms of biological role, a methylase, recognizes the double-stranded sequence 5'-GGCC-3', methylates C-? on both strands, and protects the DNA from cleavage by the FnuDI endonuclease. The sequence is that of Type II methyltransferase M.FnuDI (fnuDIM) from Fusobacterium nucleatum.